A 734-amino-acid polypeptide reads, in one-letter code: Amino-acid acetyltransferase, mitochondrial (734 aa).

The tract at residues 384–433 (YSETSSRSTRAEADSNFNLRDDIPLSSFTEQKSGELEYSPRHQNDSPTQQ) is disordered. Basic and acidic residues-rich tracts occupy residues 392-406 (TRAEADSNFNLRDDI) and 415-427 (KSGELEYSPRHQN). One can recognise an N-acetyltransferase domain in the interval 555-724 (GVPQISLTDP…YEAVCKTIEP (170 aa)).

It belongs to the acetyltransferase family.

The protein localises to the mitochondrion. It carries out the reaction L-glutamate + acetyl-CoA = N-acetyl-L-glutamate + CoA + H(+). It functions in the pathway amino-acid biosynthesis; L-arginine biosynthesis; N(2)-acetyl-L-ornithine from L-glutamate: step 1/4. N-acetylglutamate synthase involved in arginine biosynthesis. The sequence is that of Amino-acid acetyltransferase, mitochondrial (arg2) from Botryotinia fuckeliana (strain B05.10) (Noble rot fungus).